Here is a 254-residue protein sequence, read N- to C-terminus: Phosphoribosylaminoimidazole-succinocarboxamide synthase (254 aa).

It belongs to the SAICAR synthetase family.

It catalyses the reaction 5-amino-1-(5-phospho-D-ribosyl)imidazole-4-carboxylate + L-aspartate + ATP = (2S)-2-[5-amino-1-(5-phospho-beta-D-ribosyl)imidazole-4-carboxamido]succinate + ADP + phosphate + 2 H(+). The protein operates within purine metabolism; IMP biosynthesis via de novo pathway; 5-amino-1-(5-phospho-D-ribosyl)imidazole-4-carboxamide from 5-amino-1-(5-phospho-D-ribosyl)imidazole-4-carboxylate: step 1/2. This chain is Phosphoribosylaminoimidazole-succinocarboxamide synthase, found in Rhizobium meliloti (strain 1021) (Ensifer meliloti).